Here is a 217-residue protein sequence, read N- to C-terminus: Ribonuclease HII (217 aa).

Positions 27 to 216 (SRVAGVDEAG…VKESIQEGVC (190 aa)) constitute an RNase H type-2 domain. 3 residues coordinate a divalent metal cation: Asp33, Glu34, and Asp126.

It belongs to the RNase HII family. Requires Mn(2+) as cofactor. The cofactor is Mg(2+).

It localises to the cytoplasm. The enzyme catalyses Endonucleolytic cleavage to 5'-phosphomonoester.. Endonuclease that specifically degrades the RNA of RNA-DNA hybrids. The sequence is that of Ribonuclease HII from Chlamydia trachomatis serovar A (strain ATCC VR-571B / DSM 19440 / HAR-13).